Consider the following 271-residue polypeptide: Mannosyl-3-phosphoglycerate phosphatase (271 aa).

D13 (nucleophile) is an active-site residue. 3 residues coordinate Mg(2+): D13, D15, and D214.

Belongs to the HAD-like hydrolase superfamily. MPGP family. Mg(2+) is required as a cofactor.

The protein resides in the cytoplasm. The enzyme catalyses 2-O-(alpha-D-mannosyl)-3-phosphoglycerate + H2O = (2R)-2-O-(alpha-D-mannosyl)-glycerate + phosphate. The sequence is that of Mannosyl-3-phosphoglycerate phosphatase (yedP) from Escherichia coli O6:H1 (strain CFT073 / ATCC 700928 / UPEC).